The sequence spans 432 residues: Glutamate-1-semialdehyde 2,1-aminomutase 2 (432 aa).

Lysine 268 is subject to N6-(pyridoxal phosphate)lysine.

Belongs to the class-III pyridoxal-phosphate-dependent aminotransferase family. HemL subfamily. Homodimer. Pyridoxal 5'-phosphate serves as cofactor.

The protein resides in the cytoplasm. It catalyses the reaction (S)-4-amino-5-oxopentanoate = 5-aminolevulinate. It functions in the pathway porphyrin-containing compound metabolism; protoporphyrin-IX biosynthesis; 5-aminolevulinate from L-glutamyl-tRNA(Glu): step 2/2. In Listeria monocytogenes serotype 4b (strain F2365), this protein is Glutamate-1-semialdehyde 2,1-aminomutase 2.